The chain runs to 262 residues: Ribosomal RNA small subunit methyltransferase A (262 aa).

S-adenosyl-L-methionine contacts are provided by isoleucine 18, glycine 43, glutamate 65, aspartate 91, and asparagine 110.

Belongs to the class I-like SAM-binding methyltransferase superfamily. rRNA adenine N(6)-methyltransferase family. RsmA subfamily.

It localises to the cytoplasm. It carries out the reaction adenosine(1518)/adenosine(1519) in 16S rRNA + 4 S-adenosyl-L-methionine = N(6)-dimethyladenosine(1518)/N(6)-dimethyladenosine(1519) in 16S rRNA + 4 S-adenosyl-L-homocysteine + 4 H(+). Functionally, specifically dimethylates two adjacent adenosines (A1518 and A1519) in the loop of a conserved hairpin near the 3'-end of 16S rRNA in the 30S particle. May play a critical role in biogenesis of 30S subunits. The protein is Ribosomal RNA small subunit methyltransferase A of Ehrlichia ruminantium (strain Gardel).